The primary structure comprises 344 residues: Dihydroorotase (344 aa).

Positions 14 and 16 each coordinate Zn(2+). Substrate-binding positions include 16–18 (HFR) and N42. Positions 100, 137, and 175 each coordinate Zn(2+). K100 bears the N6-carboxylysine mark. Substrate is bound at residue H137. Residue L220 coordinates substrate. Residue D248 coordinates Zn(2+). D248 is a catalytic residue. Substrate-binding residues include H252 and A264.

The protein belongs to the metallo-dependent hydrolases superfamily. DHOase family. Class II DHOase subfamily. In terms of assembly, homodimer. Requires Zn(2+) as cofactor.

The catalysed reaction is (S)-dihydroorotate + H2O = N-carbamoyl-L-aspartate + H(+). It functions in the pathway pyrimidine metabolism; UMP biosynthesis via de novo pathway; (S)-dihydroorotate from bicarbonate: step 3/3. Catalyzes the reversible cyclization of carbamoyl aspartate to dihydroorotate. The protein is Dihydroorotase of Erythrobacter litoralis (strain HTCC2594).